The following is a 260-amino-acid chain: MTFPPVADPSSLRILISNDDGINAPGIKVLERIARTLSKDVWVVAPETEQSAAGHSLTIRRPLRVRKVSARRYAVDGTPTDSVLLGVNHVLKGKKPDLVLSGINRGANLGEDVTYSGTVAAAMEGTILGIPAIALSQTLEHPHPVKWGTVEHWAPDVIRRLLAKGWSRNVLINVNFPDVIAASVTGIEITRQGKRKIGDEIMERHDPRGEAYVWIGAQRAEDRSKPGTDIEAVFRGAISVTPLCFDLTHRDDMKALETAF.

Positions 19, 20, 51, and 104 each coordinate a divalent metal cation.

The protein belongs to the SurE nucleotidase family. Requires a divalent metal cation as cofactor.

Its subcellular location is the cytoplasm. It catalyses the reaction a ribonucleoside 5'-phosphate + H2O = a ribonucleoside + phosphate. In terms of biological role, nucleotidase that shows phosphatase activity on nucleoside 5'-monophosphates. The polypeptide is 5'-nucleotidase SurE (Paramagnetospirillum magneticum (strain ATCC 700264 / AMB-1) (Magnetospirillum magneticum)).